A 225-amino-acid polypeptide reads, in one-letter code: MAIKDWPEGEGPRDKLLVKGAAHLSDAELLAVLLRNGLSGLNAVDLARSLIHEFGGLRSLLCAPKHQVCRLPGVGPVKYAQLQAAAELARRVAQENLQRGQVLTNPDLTRDYLMRQLADRSYEVFAILLLDSQHRVIQFVELFRGTIDSASVYPREVVSLVLEKKAAAVIVCHNHPSGIAEPSQADRRITERLKNALATIDVSLLDHMVVGDREIVSFAERGWIN.

An MPN domain is found at 102–224 (VLTNPDLTRD…IVSFAERGWI (123 aa)). Residues H173, H175, and D186 each coordinate Zn(2+). The JAMM motif signature appears at 173-186 (HNHPSGIAEPSQAD).

It belongs to the UPF0758 family.

The polypeptide is UPF0758 protein Shewmr7_0359 (Shewanella sp. (strain MR-7)).